Reading from the N-terminus, the 463-residue chain is Glucagon-like peptide 1 receptor (463 aa).

The first 21 residues, 1 to 21 (MAVTPSLLRLALLLLGAVGRA), serve as a signal peptide directing secretion. Residues 22–139 (GPRPQGATVS…KQGERNSPEE (118 aa)) are Extracellular-facing. 3 disulfides stabilise this stretch: C46-C71, C62-C104, and C85-C126. 3 N-linked (GlcNAc...) asparagine glycosylation sites follow: N63, N82, and N115. The chain crosses the membrane as a helical span at residues 140–164 (QLLSLYIIYTVGYALSFSALVIASA). Topologically, residues 165–175 (ILVSFRHLHCT) are cytoplasmic. Residues 176 to 201 (RNYIHLNLFASFILRALSVFIKDAAL) traverse the membrane as a helical segment. Residues 202 to 227 (KWMYSTAAQQHQWDGLLSYQDSLGCR) are Extracellular-facing. A disulfide bridge links C226 with C296. Residues 228–251 (LVFLLMQYCVAANYYWLLVEGVYL) traverse the membrane as a helical segment. The Cytoplasmic portion of the chain corresponds to 252 to 265 (YTLLAFSVFSEQRI). The chain crosses the membrane as a helical span at residues 266–290 (FKLYLSIGWGVPLLFVIPWGIVKYL). Residues 291 to 305 (YEDEGCWTRNSNMNY) lie on the Extracellular side of the membrane. The chain crosses the membrane as a helical span at residues 306–328 (WLIIRLPILFAIGVNFLVFIRVI). Residues 329–348 (CIVIAKLKANLMCKTDIKCR) are Cytoplasmic-facing. The residue at position 341 (C341) is an ADP-ribosylcysteine. R348 carries the post-translational modification ADP-ribosylarginine. A helical membrane pass occupies residues 349 to 370 (LAKSTLTLIPLLGTHEVIFAFV). Residues 352–355 (STLT) are important for allosteric inhibitor binding. The Extracellular segment spans residues 371 to 383 (MDEHARGTLRFVK). The helical transmembrane segment at 384 to 404 (LFTELSFTSFQGFMVAVLYCF) threads the bilayer. Topologically, residues 405–463 (VNNEVQMEFRKSWERWRLERLNIQRDSSMKPLKCPTSSVSSGATVGSSVYAATCQNSCS) are cytoplasmic.

It belongs to the G-protein coupled receptor 2 family. As to quaternary structure, may form homodimers and heterodimers with GIPR. Post-translationally, N-glycosylation enhances cell surface expression and lengthens receptor half-life by preventing degradation in the ER. In terms of tissue distribution, pancreatic islets, stomach, lung, rat insulinoma cell line.

It is found in the cell membrane. G-protein coupled receptor for glucagon-like peptide 1 (GLP-1). Ligand binding triggers activation of a signaling cascade that leads to the activation of adenylyl cyclase and increased intracellular cAMP levels. Plays a role in regulating insulin secretion in response to GLP-1. The sequence is that of Glucagon-like peptide 1 receptor (Glp1r) from Rattus norvegicus (Rat).